Consider the following 238-residue polypeptide: ATP-dependent dethiobiotin synthetase BioD (238 aa).

Position 13 to 18 (13 to 18 (EIGKTV)) interacts with ATP. Mg(2+) is bound at residue Thr17. Lys38 is a catalytic residue. Position 42 (Thr42) interacts with substrate. Residues Arg59 and Glu111 each contribute to the Mg(2+) site. ATP is bound by residues 111 to 114 (EGAG), 175 to 176 (NQ), and 204 to 206 (PLL).

It belongs to the dethiobiotin synthetase family. As to quaternary structure, homodimer. It depends on Mg(2+) as a cofactor.

It is found in the cytoplasm. The enzyme catalyses (7R,8S)-7,8-diammoniononanoate + CO2 + ATP = (4R,5S)-dethiobiotin + ADP + phosphate + 3 H(+). Its pathway is cofactor biosynthesis; biotin biosynthesis; biotin from 7,8-diaminononanoate: step 1/2. Catalyzes a mechanistically unusual reaction, the ATP-dependent insertion of CO2 between the N7 and N8 nitrogen atoms of 7,8-diaminopelargonic acid (DAPA, also called 7,8-diammoniononanoate) to form a ureido ring. This Geobacillus kaustophilus (strain HTA426) protein is ATP-dependent dethiobiotin synthetase BioD.